Here is a 187-residue protein sequence, read N- to C-terminus: Calcium and integrin-binding family member 2 (187 aa).

EF-hand domains follow at residues 66–101, 103–138, and 144–179; these read RENP…LCES, PREL…LTKS, and EVVL…APDF. Residues D116, N118, D120, D127, D157, D159, D161, K163, and D168 each contribute to the Ca(2+) site.

In terms of assembly, monomer. Homodimer. Interacts with WHRN and MYO7A. Interacts with ITGA2B (via C-terminus cytoplasmic tail region); the interactions are stabilized/increased in a calcium and magnesium-dependent manner. Interacts with ITGA7 (via C-terminus cytoplasmic tail region); the interactions are stabilized/increased in a calcium and magnesium-dependent manner. Interacts with TMC1. Interacts with TMC2. In terms of tissue distribution, widely expressed.

Its subcellular location is the cytoplasm. It localises to the cell projection. The protein localises to the stereocilium. The protein resides in the photoreceptor inner segment. It is found in the cilium. Its subcellular location is the photoreceptor outer segment. It localises to the cell membrane. The protein localises to the sarcolemma. In terms of biological role, calcium- and integrin-binding protein that plays a role in intracellular calcium homeostasis. Acts as an auxiliary subunit of the sensory mechanoelectrical transduction (MET) channel in hair cells. Essential for mechanoelectrical transduction (MET) currents in auditory hair cells and thereby required for hearing. Regulates the function of hair cell mechanotransduction by controlling the distribution of transmembrane channel-like proteins TMC1 and TMC2, and by regulating the function of the MET channels in hair cells. Required for the maintenance of auditory hair cell stereocilia bundle morphology and function and for hair-cell survival in the cochlea. Critical for proper photoreceptor cell maintenance and function. Plays a role in intracellular calcium homeostasis by decreasing ATP-induced calcium release. The sequence is that of Calcium and integrin-binding family member 2 (CIB2) from Homo sapiens (Human).